A 284-amino-acid chain; its full sequence is NAD kinase (284 aa).

Asp71 acts as the Proton acceptor in catalysis. Residues 71–72, 144–145, Asp174, 185–190, and Gln242 contribute to the NAD(+) site; these read DG, ND, and TAYNLS.

Belongs to the NAD kinase family. It depends on a divalent metal cation as a cofactor.

The protein resides in the cytoplasm. It carries out the reaction NAD(+) + ATP = ADP + NADP(+) + H(+). Its function is as follows. Involved in the regulation of the intracellular balance of NAD and NADP, and is a key enzyme in the biosynthesis of NADP. Catalyzes specifically the phosphorylation on 2'-hydroxyl of the adenosine moiety of NAD to yield NADP. The sequence is that of NAD kinase from Sulfurimonas denitrificans (strain ATCC 33889 / DSM 1251) (Thiomicrospira denitrificans (strain ATCC 33889 / DSM 1251)).